The chain runs to 102 residues: Small ribosomal subunit protein uS10 (102 aa).

Belongs to the universal ribosomal protein uS10 family. Part of the 30S ribosomal subunit.

Involved in the binding of tRNA to the ribosomes. This Macrococcus caseolyticus (strain JCSC5402) (Macrococcoides caseolyticum) protein is Small ribosomal subunit protein uS10.